Here is a 282-residue protein sequence, read N- to C-terminus: HTH-type transcriptional activator RhaR (282 aa).

Residues 179-277 form the HTH araC/xylS-type domain; the sequence is DKLITALANS…GMTPSQWRHL (99 aa). DNA-binding regions (H-T-H motif) lie at residues 196–217 and 244–267; these read DAFC…RAQT and ISEI…TRET.

In terms of assembly, binds DNA as a dimer.

The protein resides in the cytoplasm. Activates expression of the rhaSR operon in response to L-rhamnose. This chain is HTH-type transcriptional activator RhaR, found in Salmonella agona (strain SL483).